The sequence spans 71 residues: Pro-MCH (71 aa).

The first 20 residues, 1–20 (AKMNLSSYILILTFSLFSQG), serve as a signal peptide directing secretion.

The protein belongs to the melanin-concentrating hormone family.

Its subcellular location is the secreted. The sequence is that of Pro-MCH (PMCH) from Hylobates lar (Lar gibbon).